A 78-amino-acid chain; its full sequence is Beta-defensin 135 (78 aa).

The N-terminal stretch at 1–24 (MATRSVLLALVVLNLLFYVPPGRS) is a signal peptide. 2 disulfides stabilise this stretch: Cys37–Cys64 and Cys48–Cys66.

It belongs to the beta-defensin family.

Its subcellular location is the secreted. Has antibacterial activity. The protein is Beta-defensin 135 (DEFB135) of Pan troglodytes (Chimpanzee).